The following is a 126-amino-acid chain: S-adenosylmethionine decarboxylase proenzyme (126 aa).

S63 serves as the catalytic Schiff-base intermediate with substrate; via pyruvic acid. Pyruvic acid (Ser); by autocatalysis is present on S63. H68 serves as the catalytic Proton acceptor; for processing activity. The Proton donor; for catalytic activity role is filled by C83.

It belongs to the prokaryotic AdoMetDC family. Type 1 subfamily. In terms of assembly, heterotetramer of two alpha and two beta chains arranged as a dimer of alpha/beta heterodimers. Requires pyruvate as cofactor. Post-translationally, is synthesized initially as an inactive proenzyme. Formation of the active enzyme involves a self-maturation process in which the active site pyruvoyl group is generated from an internal serine residue via an autocatalytic post-translational modification. Two non-identical subunits are generated from the proenzyme in this reaction, and the pyruvate is formed at the N-terminus of the alpha chain, which is derived from the carboxyl end of the proenzyme. The post-translation cleavage follows an unusual pathway, termed non-hydrolytic serinolysis, in which the side chain hydroxyl group of the serine supplies its oxygen atom to form the C-terminus of the beta chain, while the remainder of the serine residue undergoes an oxidative deamination to produce ammonia and the pyruvoyl group blocking the N-terminus of the alpha chain.

It carries out the reaction S-adenosyl-L-methionine + H(+) = S-adenosyl 3-(methylsulfanyl)propylamine + CO2. The protein operates within amine and polyamine biosynthesis; S-adenosylmethioninamine biosynthesis; S-adenosylmethioninamine from S-adenosyl-L-methionine: step 1/1. In terms of biological role, catalyzes the decarboxylation of S-adenosylmethionine to S-adenosylmethioninamine (dcAdoMet), the propylamine donor required for the synthesis of the polyamines spermine and spermidine from the diamine putrescine. This is S-adenosylmethionine decarboxylase proenzyme from Pelotomaculum thermopropionicum (strain DSM 13744 / JCM 10971 / SI).